The chain runs to 488 residues: 3-octaprenyl-4-hydroxybenzoate carboxy-lyase (488 aa).

Asn172 lines the Mn(2+) pocket. Residues 175–177 (IYR), 189–191 (RWL), and 194–195 (RG) contribute to the prenylated FMN site. Mn(2+) is bound at residue Glu238. Asp287 serves as the catalytic Proton donor.

Belongs to the UbiD family. Homohexamer. Prenylated FMN serves as cofactor. Requires Mn(2+) as cofactor.

Its subcellular location is the cell membrane. It carries out the reaction a 4-hydroxy-3-(all-trans-polyprenyl)benzoate + H(+) = a 2-(all-trans-polyprenyl)phenol + CO2. It functions in the pathway cofactor biosynthesis; ubiquinone biosynthesis. Catalyzes the decarboxylation of 3-octaprenyl-4-hydroxy benzoate to 2-octaprenylphenol, an intermediate step in ubiquinone biosynthesis. This is 3-octaprenyl-4-hydroxybenzoate carboxy-lyase from Legionella pneumophila (strain Paris).